A 245-amino-acid chain; its full sequence is tRNA1(Val) (adenine(37)-N6)-methyltransferase (245 aa).

The protein belongs to the methyltransferase superfamily. tRNA (adenine-N(6)-)-methyltransferase family.

The protein localises to the cytoplasm. It catalyses the reaction adenosine(37) in tRNA1(Val) + S-adenosyl-L-methionine = N(6)-methyladenosine(37) in tRNA1(Val) + S-adenosyl-L-homocysteine + H(+). In terms of biological role, specifically methylates the adenine in position 37 of tRNA(1)(Val) (anticodon cmo5UAC). The protein is tRNA1(Val) (adenine(37)-N6)-methyltransferase of Salmonella typhi.